The sequence spans 371 residues: Putative glutamate--cysteine ligase 2 (371 aa).

It belongs to the glutamate--cysteine ligase type 2 family. YbdK subfamily.

It carries out the reaction L-cysteine + L-glutamate + ATP = gamma-L-glutamyl-L-cysteine + ADP + phosphate + H(+). Functionally, ATP-dependent carboxylate-amine ligase which exhibits weak glutamate--cysteine ligase activity. The polypeptide is Putative glutamate--cysteine ligase 2 (Burkholderia multivorans (strain ATCC 17616 / 249)).